The primary structure comprises 365 residues: Histidinol-phosphate aminotransferase (365 aa).

The residue at position 227 (lysine 227) is an N6-(pyridoxal phosphate)lysine.

Belongs to the class-II pyridoxal-phosphate-dependent aminotransferase family. Histidinol-phosphate aminotransferase subfamily. Homodimer. Requires pyridoxal 5'-phosphate as cofactor.

It carries out the reaction L-histidinol phosphate + 2-oxoglutarate = 3-(imidazol-4-yl)-2-oxopropyl phosphate + L-glutamate. Its pathway is amino-acid biosynthesis; L-histidine biosynthesis; L-histidine from 5-phospho-alpha-D-ribose 1-diphosphate: step 7/9. This Polaromonas naphthalenivorans (strain CJ2) protein is Histidinol-phosphate aminotransferase.